Here is a 567-residue protein sequence, read N- to C-terminus: Adenine deaminase 2 (567 aa).

The protein belongs to the metallo-dependent hydrolases superfamily. Adenine deaminase family. It depends on Mn(2+) as a cofactor.

It catalyses the reaction adenine + H2O + H(+) = hypoxanthine + NH4(+). In Oenococcus oeni (strain ATCC BAA-331 / PSU-1), this protein is Adenine deaminase 2.